The chain runs to 479 residues: UDP-N-acetylmuramate--L-alanine ligase (479 aa).

Gly-124 to Thr-130 is a binding site for ATP.

Belongs to the MurCDEF family.

The protein localises to the cytoplasm. The enzyme catalyses UDP-N-acetyl-alpha-D-muramate + L-alanine + ATP = UDP-N-acetyl-alpha-D-muramoyl-L-alanine + ADP + phosphate + H(+). It functions in the pathway cell wall biogenesis; peptidoglycan biosynthesis. Its function is as follows. Cell wall formation. This is UDP-N-acetylmuramate--L-alanine ligase from Synechococcus sp. (strain RCC307).